The following is a 56-amino-acid chain: MVTRFLGPRYRELVKNWVPTAYTWGAVGAVGLVWATDWRLILDWVPYINGKFKKDN.

Residues 1–12 (MVTRFLGPRYRE) are Mitochondrial matrix-facing. Residues 13 to 35 (LVKNWVPTAYTWGAVGAVGLVWA) form a helical membrane-spanning segment. Residues 36–56 (TDWRLILDWVPYINGKFKKDN) lie on the Mitochondrial intermembrane side of the membrane.

The protein belongs to the UQCR11/QCR10 family. As to quaternary structure, component of the ubiquinol-cytochrome c oxidoreductase (cytochrome b-c1 complex, complex III, CIII), a multisubunit enzyme composed of 11 subunits. The complex is composed of 3 respiratory subunits cytochrome b, cytochrome c1 and Rieske protein UQCRFS1, 2 core protein subunits UQCRC1/QCR1 and UQCRC2/QCR2, and 6 low-molecular weight protein subunits UQCRH/QCR6, UQCRB/QCR7, UQCRQ/QCR8, UQCR10/QCR9, UQCR11/QCR10 and subunit 9, the cleavage product of Rieske protein UQCRFS1. The complex exists as an obligatory dimer and forms supercomplexes (SCs) in the inner mitochondrial membrane with NADH-ubiquinone oxidoreductase (complex I, CI) and cytochrome c oxidase (complex IV, CIV), resulting in different assemblies (supercomplex SCI(1)III(2)IV(1) and megacomplex MCI(2)III(2)IV(2)).

It is found in the mitochondrion inner membrane. In terms of biological role, component of the ubiquinol-cytochrome c oxidoreductase, a multisubunit transmembrane complex that is part of the mitochondrial electron transport chain which drives oxidative phosphorylation. The respiratory chain contains 3 multisubunit complexes succinate dehydrogenase (complex II, CII), ubiquinol-cytochrome c oxidoreductase (cytochrome b-c1 complex, complex III, CIII) and cytochrome c oxidase (complex IV, CIV), that cooperate to transfer electrons derived from NADH and succinate to molecular oxygen, creating an electrochemical gradient over the inner membrane that drives transmembrane transport and the ATP synthase. The cytochrome b-c1 complex catalyzes electron transfer from ubiquinol to cytochrome c, linking this redox reaction to translocation of protons across the mitochondrial inner membrane, with protons being carried across the membrane as hydrogens on the quinol. In the process called Q cycle, 2 protons are consumed from the matrix, 4 protons are released into the intermembrane space and 2 electrons are passed to cytochrome c. QCR10 has a role in CIII assembly and RIP1 stability. This chain is Cytochrome b-c1 complex subunit 10 (UQCR11), found in Homo sapiens (Human).